The following is a 593-amino-acid chain: Arginine--tRNA ligase (593 aa).

Residues 123-133 (PNVAKPMHVGH) carry the 'HIGH' region motif.

Belongs to the class-I aminoacyl-tRNA synthetase family. In terms of assembly, monomer.

The protein resides in the cytoplasm. The enzyme catalyses tRNA(Arg) + L-arginine + ATP = L-arginyl-tRNA(Arg) + AMP + diphosphate. In Phenylobacterium zucineum (strain HLK1), this protein is Arginine--tRNA ligase.